A 240-amino-acid chain; its full sequence is Ubiquinone biosynthesis O-methyltransferase (240 aa).

Residues arginine 44, glycine 64, aspartate 85, and methionine 129 each coordinate S-adenosyl-L-methionine.

Belongs to the methyltransferase superfamily. UbiG/COQ3 family.

The catalysed reaction is a 3-demethylubiquinol + S-adenosyl-L-methionine = a ubiquinol + S-adenosyl-L-homocysteine + H(+). It catalyses the reaction a 3-(all-trans-polyprenyl)benzene-1,2-diol + S-adenosyl-L-methionine = a 2-methoxy-6-(all-trans-polyprenyl)phenol + S-adenosyl-L-homocysteine + H(+). It functions in the pathway cofactor biosynthesis; ubiquinone biosynthesis. Its function is as follows. O-methyltransferase that catalyzes the 2 O-methylation steps in the ubiquinone biosynthetic pathway. The protein is Ubiquinone biosynthesis O-methyltransferase of Escherichia coli (strain ATCC 8739 / DSM 1576 / NBRC 3972 / NCIMB 8545 / WDCM 00012 / Crooks).